Reading from the N-terminus, the 330-residue chain is Ketol-acid reductoisomerase (NADP(+)) (330 aa).

Residues 2–181 (MEKYHETDAD…GATRAVVLET (180 aa)) enclose the KARI N-terminal Rossmann domain. NADP(+)-binding positions include 25–28 (YGSQ), R48, S52, and 82–85 (DENQ). The active site involves H107. G133 contacts NADP(+). The 146-residue stretch at 182–327 (TFREETETDL…SELRAMMPQF (146 aa)) folds into the KARI C-terminal knotted domain. Residues D190, E194, E226, and E230 each coordinate Mg(2+). Residue S251 participates in substrate binding.

This sequence belongs to the ketol-acid reductoisomerase family. It depends on Mg(2+) as a cofactor.

The enzyme catalyses (2R)-2,3-dihydroxy-3-methylbutanoate + NADP(+) = (2S)-2-acetolactate + NADPH + H(+). It carries out the reaction (2R,3R)-2,3-dihydroxy-3-methylpentanoate + NADP(+) = (S)-2-ethyl-2-hydroxy-3-oxobutanoate + NADPH + H(+). The protein operates within amino-acid biosynthesis; L-isoleucine biosynthesis; L-isoleucine from 2-oxobutanoate: step 2/4. It functions in the pathway amino-acid biosynthesis; L-valine biosynthesis; L-valine from pyruvate: step 2/4. Functionally, involved in the biosynthesis of branched-chain amino acids (BCAA). Catalyzes an alkyl-migration followed by a ketol-acid reduction of (S)-2-acetolactate (S2AL) to yield (R)-2,3-dihydroxy-isovalerate. In the isomerase reaction, S2AL is rearranged via a Mg-dependent methyl migration to produce 3-hydroxy-3-methyl-2-ketobutyrate (HMKB). In the reductase reaction, this 2-ketoacid undergoes a metal-dependent reduction by NADPH to yield (R)-2,3-dihydroxy-isovalerate. The sequence is that of Ketol-acid reductoisomerase (NADP(+)) from Methanocorpusculum labreanum (strain ATCC 43576 / DSM 4855 / Z).